A 310-amino-acid chain; its full sequence is Olfactory receptor 8I2 (310 aa).

The Extracellular segment spans residues 1–25 (MAGNNFTEVTVFILSGFANHPELQV). The N-linked (GlcNAc...) asparagine glycan is linked to N5. A helical transmembrane segment spans residues 26–46 (SLFLMFLFIYLFTVLGNLGLI). Residues 47–54 (TLIRMDSQ) are Cytoplasmic-facing. A helical membrane pass occupies residues 55 to 75 (LHTPMYFFLSNLAFIDIFYSS). Residues 76–99 (TVTPKALVNFQSNRRSISFVGCFV) are Extracellular-facing. C97 and C188 form a disulfide bridge. Residues 100–120 (QMYFFVGLVCCECFLLGSMAY) traverse the membrane as a helical segment. The Cytoplasmic portion of the chain corresponds to 121–139 (NRYIAICNPLLYSVVMSQK). Residues 140-160 (VSNWLGVMPYVIGFTSSLISV) form a helical membrane-spanning segment. The Extracellular portion of the chain corresponds to 161 to 196 (WVISSLAFCDSSINHFFCDTTALLALSCVDTFGTEM). A helical membrane pass occupies residues 197-216 (VSFVLAGFTLLSSLLIITVT). Residues 217-236 (YIIIISAILRIQSAAGRQKA) lie on the Cytoplasmic side of the membrane. A helical membrane pass occupies residues 237-257 (FSTCASHLMAVTIFYGSLIFT). The Extracellular segment spans residues 258 to 270 (YLQPDNTSSLTQA). Residues 271–291 (QVASVFYTIVIPMLNPLIYSL) form a helical membrane-spanning segment. Residues 292–310 (RNKDVKNALLRVIHRKLFP) lie on the Cytoplasmic side of the membrane.

The protein belongs to the G-protein coupled receptor 1 family.

Its subcellular location is the cell membrane. Odorant receptor. This chain is Olfactory receptor 8I2 (OR8I2), found in Homo sapiens (Human).